The primary structure comprises 375 residues: Monocyte differentiation antigen CD14 (375 aa).

The N-terminal stretch at 1–19 is a signal peptide; the sequence is MERASCLLLLLLPLVHVSA. 2 disulfides stabilise this stretch: C25–C36 and C34–C51. N37 carries N-linked (GlcNAc...) asparagine glycosylation. LRR repeat units follow at residues 54–82, 83–118, 119–144, 145–172, 173–196, 197–224, 225–251, 252–278, 279–299, 300–321, and 322–349; these read AVEV…PRQY, ADTV…YSRL, KELT…GLAL, SSLR…KPGL, KVLS…FPAL, TSLD…FPAI, QNLA…GVQP, HSLD…SSAL, NSLN…PAKL, RVLD…LPEV, and DNLT…SGVV. N151 carries N-linked (GlcNAc...) asparagine glycosylation. Cystine bridges form between C187–C217 and C241–C272. N282 is a glycosylation site (N-linked (GlcNAc...) asparagine). The interval 290–375 is required for response to bacterial lipopolysaccharide (LPS); it reads QVPKGLPAKL…VLLQGARGFA (86 aa). Residue N323 is glycosylated (N-linked (GlcNAc...) asparagine). T336 carries O-linked (GalNAc...) threonine glycosylation. N345 carries GPI-anchor amidated asparagine lipidation. Positions 346-375 are cleaved as a propeptide — removed in mature form; the sequence is SGVVPACARSTLSVGVSGTLVLLQGARGFA.

Interacts with LPS-bound LPB. Belongs to the lipopolysaccharide (LPS) receptor, a multi-protein complex containing at least CD14, LY96 and TLR4. Interacts with LPAR1. Interacts with the TLR2:TLR6 or TLR2:TLR1 heterodimers; upon interaction with ligands such as diacylated lipopeptides and triacylated lipopeptides, respectively. Interacts with MYO18A. Interacts with FSTL1. In terms of processing, N- and O- glycosylated. O-glycosylated with a core 1 or possibly core 8 glycan. As to expression, detected on macrophages (at protein level). Expressed strongly on the surface of monocytes and weakly on the surface of granulocytes; also expressed by most tissue macrophages.

Its subcellular location is the cell membrane. The protein localises to the secreted. It localises to the membrane raft. The protein resides in the golgi apparatus. Functionally, coreceptor for bacterial lipopolysaccharide. In concert with LBP, binds to monomeric lipopolysaccharide and delivers it to the LY96/TLR4 complex, thereby mediating the innate immune response to bacterial lipopolysaccharide (LPS). Acts via MyD88, TIRAP and TRAF6, leading to NF-kappa-B activation, cytokine secretion and the inflammatory response. Acts as a coreceptor for TLR2:TLR6 heterodimer in response to diacylated lipopeptides and for TLR2:TLR1 heterodimer in response to triacylated lipopeptides, these clusters trigger signaling from the cell surface and subsequently are targeted to the Golgi in a lipid-raft dependent pathway. Binds electronegative LDL (LDL(-)) and mediates the cytokine release induced by LDL(-). In Homo sapiens (Human), this protein is Monocyte differentiation antigen CD14 (CD14).